Here is a 132-residue protein sequence, read N- to C-terminus: Small ribosomal subunit protein uS8 (132 aa).

It belongs to the universal ribosomal protein uS8 family. In terms of assembly, part of the 30S ribosomal subunit. Contacts proteins S5 and S12.

In terms of biological role, one of the primary rRNA binding proteins, it binds directly to 16S rRNA central domain where it helps coordinate assembly of the platform of the 30S subunit. The sequence is that of Small ribosomal subunit protein uS8 from Bacillus licheniformis (strain ATCC 14580 / DSM 13 / JCM 2505 / CCUG 7422 / NBRC 12200 / NCIMB 9375 / NCTC 10341 / NRRL NRS-1264 / Gibson 46).